Consider the following 610-residue polypeptide: Ecto-NOX disulfide-thiol exchanger 2 (610 aa).

Residues 128–207 (KTVFVGGLPE…GRLHVDFAQA (80 aa)) form the RRM domain. Coiled-coil stretches lie at residues 293–328 (IQSA…LSGI) and 381–505 (RREE…KESC).

It belongs to the ENOX family. The cofactor is Cu cation. Post-translationally, glycosylated. In terms of tissue distribution, found in the sera of cancer patients with a wide variety of cancers including breast, prostate, lung and ovarian cancers, leukemias, and lymphomas. Not found in the serum of healthy volunteers or patients with disorders other than cancer. Probably shed into serum by cancer cells. Found on the cell borders of renal, kidney and ovarian carcinomas but not on the borders of surrounding non-cancerous stromal cells.

Its subcellular location is the cell membrane. The protein resides in the secreted. It is found in the extracellular space. Its activity is regulated as follows. Inhibited by the antitumor sulfonylurea LY181984, the vabilloid capsaicin, and retinoids. In terms of biological role, may be involved in cell growth. Probably acts as a terminal oxidase of plasma electron transport from cytosolic NAD(P)H via hydroquinones to acceptors at the cell surface. Hydroquinone oxidase activity alternates with a protein disulfide-thiol interchange/oxidoreductase activity which may control physical membrane displacements associated with vesicle budding or cell enlargement. The activities oscillate with a period length of 22 minutes and play a role in control of the ultradian cellular biological clock. This chain is Ecto-NOX disulfide-thiol exchanger 2 (ENOX2), found in Homo sapiens (Human).